We begin with the raw amino-acid sequence, 291 residues long: Protease HtpX (291 aa).

A run of 2 helical transmembrane segments spans residues 4–24 (IVIF…LLTC) and 37–57 (IISG…SKFI). Histidine 139 contacts Zn(2+). Glutamate 140 is an active-site residue. Histidine 143 is a binding site for Zn(2+). 2 helical membrane-spanning segments follow: residues 147-167 (GDMV…IFIS) and 195-215 (IVST…VLWF). Zn(2+) is bound at residue glutamate 220.

Belongs to the peptidase M48B family. Requires Zn(2+) as cofactor.

The protein resides in the cell membrane. The chain is Protease HtpX from Baumannia cicadellinicola subsp. Homalodisca coagulata.